Reading from the N-terminus, the 387-residue chain is Putative transmembrane protein At3g54730 (387 aa).

Positions 10 to 25 are enriched in pro residues; the sequence is PAPPLLLPSPNPPPCA. Residues 10–45 are disordered; sequence PAPPLLLPSPNPPPCALPQDLTSLVSPSEPPDPPDP. Transmembrane regions (helical) follow at residues 97–117, 128–148, 154–174, 186–206, 221–241, 292–312, 335–355, and 362–382; these read VFPL…HPLV, GSNF…ILQF, VMIS…MILL, VLFS…VGLI, IQKL…FLEI, SWCF…YPLE, FSTI…FIFF, and PFVA…LNHF.

The protein resides in the membrane. The chain is Putative transmembrane protein At3g54730 from Arabidopsis thaliana (Mouse-ear cress).